A 135-amino-acid chain; its full sequence is P2Y purinoceptor 4 (135 aa).

A helical transmembrane segment spans residues 1–25 (VHFSSSVMVLLFGLPFLVTLVCYGL). Over 26-49 (MALRLCRPLPGAGQSSSRLRSLRT) the chain is Cytoplasmic. A helical transmembrane segment spans residues 50-72 (IAVVMTVFAVCLVPFHITRTIYY). The Extracellular segment spans residues 73–90 (LARLLKADCQILNIVNVV). The helical transmembrane segment at 91–112 (YKVTRPLASANSCLDPLLYLFT) threads the bilayer. Residues 113–135 (GDKYRHQLQRLCRVSAPQRRITA) are Cytoplasmic-facing.

It belongs to the G-protein coupled receptor 1 family. Expressed in brain, heart, stria vascularis and vestibular labyrinth.

The protein resides in the cell membrane. Functionally, receptor for ATP and UTP coupled to G-proteins that activate a phosphatidylinositol-calcium second messenger system. Not activated by UDP. The chain is P2Y purinoceptor 4 (P2RY4) from Meriones unguiculatus (Mongolian jird).